A 114-amino-acid polypeptide reads, in one-letter code: Large ribosomal subunit protein uL22 (114 aa).

The protein belongs to the universal ribosomal protein uL22 family. In terms of assembly, part of the 50S ribosomal subunit.

Functionally, this protein binds specifically to 23S rRNA; its binding is stimulated by other ribosomal proteins, e.g. L4, L17, and L20. It is important during the early stages of 50S assembly. It makes multiple contacts with different domains of the 23S rRNA in the assembled 50S subunit and ribosome. Its function is as follows. The globular domain of the protein is located near the polypeptide exit tunnel on the outside of the subunit, while an extended beta-hairpin is found that lines the wall of the exit tunnel in the center of the 70S ribosome. This chain is Large ribosomal subunit protein uL22, found in Streptococcus uberis (strain ATCC BAA-854 / 0140J).